The chain runs to 574 residues: DNA mismatch repair protein MutL (574 aa).

It belongs to the DNA mismatch repair MutL/HexB family.

Its function is as follows. This protein is involved in the repair of mismatches in DNA. It is required for dam-dependent methyl-directed DNA mismatch repair. May act as a 'molecular matchmaker', a protein that promotes the formation of a stable complex between two or more DNA-binding proteins in an ATP-dependent manner without itself being part of a final effector complex. The polypeptide is DNA mismatch repair protein MutL (Coxiella burnetii (strain RSA 331 / Henzerling II)).